The following is a 101-amino-acid chain: Small ribosomal subunit protein uS14 (101 aa).

Residues 50–70 (SLPRDSSPSRQRKRCRQTGRP) are disordered. Residues 59–68 (RQRKRCRQTG) are compositionally biased toward basic residues.

The protein belongs to the universal ribosomal protein uS14 family. In terms of assembly, part of the 30S ribosomal subunit. Contacts proteins S3 and S10.

Its function is as follows. Binds 16S rRNA, required for the assembly of 30S particles and may also be responsible for determining the conformation of the 16S rRNA at the A site. This is Small ribosomal subunit protein uS14 from Erwinia tasmaniensis (strain DSM 17950 / CFBP 7177 / CIP 109463 / NCPPB 4357 / Et1/99).